Here is a 160-residue protein sequence, read N- to C-terminus: Myosin regulatory light chain, smooth muscle (160 aa).

Position 1 is a blocked amino end (Ser) (S1). S11 carries the phosphoserine modification. 2 consecutive EF-hand domains span residues 20–55 (NQIQEMKEAFTMIDQNRDGLIDVSDLKEMYSNLGTA) and 88–123 (DPEETLRNAFQMFDSDNTGYIPEEYMKDLLENMGDN). Ca(2+) is bound by residues D33, N35, D37, and D44.

In molluscan muscle, calcium regulation is associated with myosin rather than with actin. Muscle myosin contains two types of light chains: the catalytic light chain, essential for ATPase activity, and the regulatory light chain, a calcium-binding protein responsible for Ca(2+) dependent binding and Ca(2+) dependent Mg-ATPase activity. The chain is Myosin regulatory light chain, smooth muscle from Spisula sachalinensis (Sakhalin surf-clam).